A 101-amino-acid chain; its full sequence is Enhancer of yellow 2 transcription factor (101 aa).

It belongs to the ENY2 family. In terms of assembly, component of the nuclear pore complex (NPC)-associated AMEX complex (anchoring and mRNA export complex), composed of at least e(y)2 and xmas-2. Component of the SAGA transcription coactivator-HAT complexes, at least composed of Ada2b, e(y)2, Pcaf/Gcn5, Taf10 and Nipped-A/Trrap. Within the SAGA complex, e(y)2, Sgf11, and not/nonstop form an additional subcomplex of SAGA called the DUB module (deubiquitination module). Component of the THO complex, composed of at least e(y)2, HPR1, THO2, THOC5, THOC6 and THOC7. Interacts with e(y)1. Interacts with su(Hw) (via zinc fingers). Interacts with xmas-2; required for localization to the nuclear periphery. Interacts with the nuclear pore complex (NPC).

The protein localises to the nucleus. It is found in the nucleoplasm. It localises to the cytoplasm. Functionally, involved in mRNA export coupled transcription activation by association with both the AMEX and the SAGA complexes. The SAGA complex is a multiprotein complex that activates transcription by remodeling chromatin and mediating histone acetylation and deubiquitination. Within the SAGA complex, participates in a subcomplex that specifically deubiquitinates histone H2B. The SAGA complex is recruited to specific gene promoters by activators, where it is required for transcription. Required for nuclear receptor-mediated transactivation. Involved in transcription elongation by recruiting the THO complex onto nascent mRNA. The AMEX complex functions in docking export-competent ribonucleoprotein particles (mRNPs) to the nuclear entrance of the nuclear pore complex (nuclear basket). AMEX participates in mRNA export and accurate chromatin positioning in the nucleus by tethering genes to the nuclear periphery. The polypeptide is Enhancer of yellow 2 transcription factor (Drosophila sechellia (Fruit fly)).